Reading from the N-terminus, the 297-residue chain is Acetaldehyde dehydrogenase (297 aa).

NAD(+) is bound at residue 15-18 (SGSI). Cys130 serves as the catalytic Acyl-thioester intermediate. Residues 162–170 (SAGIATREN) and Asn272 each bind NAD(+).

It belongs to the acetaldehyde dehydrogenase family.

The catalysed reaction is acetaldehyde + NAD(+) + CoA = acetyl-CoA + NADH + H(+). This is Acetaldehyde dehydrogenase (mhpF) from Burkholderia pseudomallei (strain K96243).